The sequence spans 139 residues: uncharacterized protein (139 aa).

Transmembrane regions (helical) follow at residues tyrosine 38–phenylalanine 60, phenylalanine 72–serine 94, and isoleucine 114–alanine 136.

The protein resides in the cell membrane. This is an uncharacterized protein from Treponema pallidum (strain Nichols).